The primary structure comprises 445 residues: ATP-dependent protease ATPase subunit HslU (445 aa).

Residues Ile-18, 60-65 (GVGKTE), Asp-258, Glu-323, and Arg-395 each bind ATP.

This sequence belongs to the ClpX chaperone family. HslU subfamily. A double ring-shaped homohexamer of HslV is capped on each side by a ring-shaped HslU homohexamer. The assembly of the HslU/HslV complex is dependent on binding of ATP.

It is found in the cytoplasm. ATPase subunit of a proteasome-like degradation complex; this subunit has chaperone activity. The binding of ATP and its subsequent hydrolysis by HslU are essential for unfolding of protein substrates subsequently hydrolyzed by HslV. HslU recognizes the N-terminal part of its protein substrates and unfolds these before they are guided to HslV for hydrolysis. The protein is ATP-dependent protease ATPase subunit HslU of Syntrophotalea carbinolica (strain DSM 2380 / NBRC 103641 / GraBd1) (Pelobacter carbinolicus).